Here is a 328-residue protein sequence, read N- to C-terminus: Probable cytosolic iron-sulfur protein assembly protein 1 (328 aa).

WD repeat units follow at residues 12 to 49, 54 to 93, 102 to 141, 148 to 187, 192 to 233, 246 to 284, and 291 to 328; these read LHGDRCWSVDISKGLLATGSADRKIKLVDVRNFKLVEE, AHKKAVRSVAWRPHCNVLAAGSFDTTVSIWGRDDDDYSGE, GHENEVKSVAWSHDGAYLATCSRDKSVWIWEADELSEEFE, EHSQDVKHIVWHASRLLLASSSYDDTVRIWAEQDDDWECA, GHGG…ADVF, VHTRAVYSVSWSADGLIASVGSDGVLAVYKEVQAGRWEV, and AHTVYEINVVKWLALDGRVLLVTGGDDGCVNVWELREE.

This sequence belongs to the WD repeat CIA1 family. As to quaternary structure, interacts with NAR1.

It is found in the cytoplasm. Its subcellular location is the nucleus. Essential component of the cytosolic iron-sulfur (Fe/S) protein assembly machinery. Required for the maturation of extramitochondrial Fe/S proteins. In Eremothecium gossypii (strain ATCC 10895 / CBS 109.51 / FGSC 9923 / NRRL Y-1056) (Yeast), this protein is Probable cytosolic iron-sulfur protein assembly protein 1.